The sequence spans 469 residues: Argininosuccinate lyase (469 aa).

This sequence belongs to the lyase 1 family. Argininosuccinate lyase subfamily.

Its subcellular location is the cytoplasm. It catalyses the reaction 2-(N(omega)-L-arginino)succinate = fumarate + L-arginine. The protein operates within amino-acid biosynthesis; L-arginine biosynthesis; L-arginine from L-ornithine and carbamoyl phosphate: step 3/3. This is Argininosuccinate lyase from Novosphingobium aromaticivorans (strain ATCC 700278 / DSM 12444 / CCUG 56034 / CIP 105152 / NBRC 16084 / F199).